Consider the following 105-residue polypeptide: Saimiri transformation-associated protein (105 aa).

The Cytoplasmic segment spans residues 1–75; the sequence is MASEPNLRYP…GPPGPSGLPG (75 aa). Residues 1 to 75 are disordered; that stretch reads MASEPNLRYP…GPPGPSGLPG (75 aa). Residues 15–74 enclose the Collagen-like domain; that stretch reads GDRGPQGPPGPPGPQGPPGPQGPPGPQGPPGPQGPPGPQGPPGPQGPPGPPGPPGPSGLP. Residues 20 to 71 are compositionally biased toward pro residues; it reads QGPPGPPGPQGPPGPQGPPGPQGPPGPQGPPGPQGPPGPQGPPGPPGPPGPS. Residues 76 to 96 traverse the membrane as a helical segment; the sequence is LFVTNLLLGIIILLLLIIVAI. Residues 97–105 lie on the Extracellular side of the membrane; the sequence is LLVSKLVVN.

As to quaternary structure, binds to host RAS and TRAF2.

It is found in the host membrane. In terms of biological role, acts synergistically with Tip to stimulate NF-kappa-B activity and interleukin-2 gene expression by binding to host TRAF proteins. Activation of NF-kappa-B protects lymphocytes from apoptosis, thereby facilitating viral induced cell transformation. In Saimiriine herpesvirus 2 (strain 484-77) (SaHV-2), this protein is Saimiri transformation-associated protein.